A 207-amino-acid chain; its full sequence is Guanylate kinase (207 aa).

In terms of domain architecture, Guanylate kinase-like spans 4–184; that stretch reads GILFIISAPS…AINDLRTIII (181 aa). Residue 11–18 participates in ATP binding; the sequence is APSGTGKS.

It belongs to the guanylate kinase family.

It is found in the cytoplasm. It catalyses the reaction GMP + ATP = GDP + ADP. Its function is as follows. Essential for recycling GMP and indirectly, cGMP. The chain is Guanylate kinase from Buchnera aphidicola subsp. Schizaphis graminum (strain Sg).